Reading from the N-terminus, the 280-residue chain is UDP-3-O-acyl-N-acetylglucosamine deacetylase (280 aa).

His79, His237, and Asp241 together coordinate Zn(2+). His264 serves as the catalytic Proton donor.

Belongs to the LpxC family. The cofactor is Zn(2+).

It carries out the reaction a UDP-3-O-[(3R)-3-hydroxyacyl]-N-acetyl-alpha-D-glucosamine + H2O = a UDP-3-O-[(3R)-3-hydroxyacyl]-alpha-D-glucosamine + acetate. It participates in glycolipid biosynthesis; lipid IV(A) biosynthesis; lipid IV(A) from (3R)-3-hydroxytetradecanoyl-[acyl-carrier-protein] and UDP-N-acetyl-alpha-D-glucosamine: step 2/6. Catalyzes the hydrolysis of UDP-3-O-myristoyl-N-acetylglucosamine to form UDP-3-O-myristoylglucosamine and acetate, the committed step in lipid A biosynthesis. The protein is UDP-3-O-acyl-N-acetylglucosamine deacetylase of Chlamydia abortus (strain DSM 27085 / S26/3) (Chlamydophila abortus).